Here is a 1462-residue protein sequence, read N- to C-terminus: Gag-Pro-Pol polyprotein (1462 aa).

Residue G2 is the site of N-myristoyl glycine; by host attachment. Positions 93–143 (QIPSHPAPPPPSSPTHDPPDSDPQIPPPYVEPTAPQVLPVMHPHGVPPTHR) are disordered. S105 is subject to Phosphoserine; by host MAPK1. Positions 118–121 (PPPY) match the PPXY motif motif. The PTAP/PSAP motif signature appears at 124–127 (PTAP). 2 CCHC-type zinc fingers span residues 355-372 (QPCF…DCAQ) and 378-395 (GPCP…DCPR). The region spanning 476–554 (IEALLDTGAD…NNWAIIGRDA (79 aa)) is the Peptidase A2 domain. The active-site For protease activity; shared with dimeric partner is D481. In terms of domain architecture, Reverse transcriptase spans 614 to 804 (LEAGHIEPYT…GTIKFLGQII (191 aa)). Mg(2+) contacts are provided by D680, D755, D756, D1040, E1074, D1096, D1157, D1230, and D1287. Residues 1031 to 1165 (INTAPCLFSD…TDALLITPIL (135 aa)) form the RNase H type-1 domain. Positions 1219–1388 (RGLLPNHIWQ…QPIPETHSLI (170 aa)) constitute an Integrase catalytic domain. The integrase-type DNA-binding region spans 1393-1443 (HWYYFKLPGLNSRQWKGPQEALQEAAGAALIPVSANSAQWIPWRLLKQAAC).

Homodimer; the homodimers are part of the immature particles. Interacts with human TSG101 and NEDD4; these interactions are essential for budding and release of viral particles. As to quaternary structure, homodimer; further assembles as homohexamers. The cofactor is Mg(2+). Phosphorylation of the matrix protein p19 by MAPK1 seems to play a role in budding. In terms of processing, myristoylated. Myristoylation of the matrix (MA) domain mediates the transport and binding of Gag polyproteins to the host plasma membrane and is required for the assembly of viral particles. Post-translationally, specific enzymatic cleavages by the viral protease yield mature proteins. The polyprotein is cleaved during and after budding, this process is termed maturation. The protease is autoproteolytically processed at its N- and C-termini.

It is found in the virion. The catalysed reaction is Endonucleolytic cleavage to 5'-phosphomonoester.. It carries out the reaction DNA(n) + a 2'-deoxyribonucleoside 5'-triphosphate = DNA(n+1) + diphosphate. Functionally, the matrix domain targets Gag, Gag-Pro and Gag-Pro-Pol polyproteins to the plasma membrane via a multipartite membrane binding signal, that includes its myristoylated N-terminus. Its function is as follows. Matrix protein. Forms the spherical core of the virus that encapsulates the genomic RNA-nucleocapsid complex. In terms of biological role, binds strongly to viral nucleic acids and promote their aggregation. Also destabilizes the nucleic acids duplexes via highly structured zinc-binding motifs. Functionally, the aspartyl protease mediates proteolytic cleavages of Gag and Gag-Pol polyproteins during or shortly after the release of the virion from the plasma membrane. Cleavages take place as an ordered, step-wise cascade to yield mature proteins. This process is called maturation. Displays maximal activity during the budding process just prior to particle release from the cell (Potential). Cleaves the translation initiation factor eIF4G leading to the inhibition of host cap-dependent translation. Its function is as follows. RT is a multifunctional enzyme that converts the viral RNA genome into dsDNA in the cytoplasm, shortly after virus entry into the cell. This enzyme displays a DNA polymerase activity that can copy either DNA or RNA templates, and a ribonuclease H (RNase H) activity that cleaves the RNA strand of RNA-DNA heteroduplexes in a partially processive 3' to 5'-endonucleasic mode. Conversion of viral genomic RNA into dsDNA requires many steps. A tRNA-Pro binds to the primer-binding site (PBS) situated at the 5'-end of the viral RNA. RT uses the 3' end of the tRNA primer to perform a short round of RNA-dependent minus-strand DNA synthesis. The reading proceeds through the U5 region and ends after the repeated (R) region which is present at both ends of viral RNA. The portion of the RNA-DNA heteroduplex is digested by the RNase H, resulting in a ssDNA product attached to the tRNA primer. This ssDNA/tRNA hybridizes with the identical R region situated at the 3' end of viral RNA. This template exchange, known as minus-strand DNA strong stop transfer, can be either intra- or intermolecular. RT uses the 3' end of this newly synthesized short ssDNA to perform the RNA-dependent minus-strand DNA synthesis of the whole template. RNase H digests the RNA template except for a polypurine tract (PPT) situated at the 5' end of the genome. It is not clear if both polymerase and RNase H activities are simultaneous. RNase H probably can proceed both in a polymerase-dependent (RNA cut into small fragments by the same RT performing DNA synthesis) and a polymerase-independent mode (cleavage of remaining RNA fragments by free RTs). Secondly, RT performs DNA-directed plus-strand DNA synthesis using the PPT that has not been removed by RNase H as primer. PPT and tRNA primers are then removed by RNase H. The 3' and 5' ssDNA PBS regions hybridize to form a circular dsDNA intermediate. Strand displacement synthesis by RT to the PBS and PPT ends produces a blunt ended, linear dsDNA copy of the viral genome that includes long terminal repeats (LTRs) at both ends. Catalyzes viral DNA integration into the host chromosome, by performing a series of DNA cutting and joining reactions. This is Gag-Pro-Pol polyprotein (gag-pro-pol) from Homo sapiens (Human).